The primary structure comprises 379 residues: Succinyl-diaminopimelate desuccinylase (379 aa).

His-70 is a binding site for Zn(2+). Residue Asp-72 is part of the active site. Asp-103 contributes to the Zn(2+) binding site. Glu-137 (proton acceptor) is an active-site residue. 3 residues coordinate Zn(2+): Glu-138, Glu-166, and His-352.

It belongs to the peptidase M20A family. DapE subfamily. In terms of assembly, homodimer. It depends on Zn(2+) as a cofactor. Requires Co(2+) as cofactor.

It catalyses the reaction N-succinyl-(2S,6S)-2,6-diaminopimelate + H2O = (2S,6S)-2,6-diaminopimelate + succinate. It functions in the pathway amino-acid biosynthesis; L-lysine biosynthesis via DAP pathway; LL-2,6-diaminopimelate from (S)-tetrahydrodipicolinate (succinylase route): step 3/3. In terms of biological role, catalyzes the hydrolysis of N-succinyl-L,L-diaminopimelic acid (SDAP), forming succinate and LL-2,6-diaminopimelate (DAP), an intermediate involved in the bacterial biosynthesis of lysine and meso-diaminopimelic acid, an essential component of bacterial cell walls. The polypeptide is Succinyl-diaminopimelate desuccinylase (Burkholderia lata (strain ATCC 17760 / DSM 23089 / LMG 22485 / NCIMB 9086 / R18194 / 383)).